The following is a 160-amino-acid chain: uncharacterized protein (160 aa).

Positions 20-152 (EREIWVLYMK…VYEGLSILSR (133 aa)) constitute an HTH marR-type domain. Positions 66–89 (VSDIAEKMGASLSNTTGLLDRLEK) form a DNA-binding region, H-T-H motif.

This is an uncharacterized protein from Bacillus subtilis (strain 168).